The chain runs to 200 residues: Alpha/beta-tubulin-N-acetyltransferase 9 (200 aa).

One can recognise an N-acetyltransferase domain in the interval 34–181; it reads ETLRELTASE…HEVTLERPIT (148 aa).

Belongs to the acetyltransferase family. GNAT subfamily. In terms of assembly, interacts with microtubules as well as alpha/beta-tubulin heterodimers.

The protein localises to the nucleus. It is found in the cytoplasm. Its subcellular location is the cytoskeleton. The protein resides in the spindle. It localises to the spindle pole. It catalyses the reaction N-terminal L-methionyl-[tubulin] + acetyl-CoA = N-terminal N(alpha)-acetyl-L-methionyl-[tubulin] + CoA + H(+). Functionally, N-acetyltransferase that mediates the acetylation of the N-terminal residues of alpha- and beta-tubulin. Required for microtubule stability and inhibition of JNK signaling to promote cell survival during development, possibly acting independently of its N-acetyltransferase activity. Necessary for the stabilization of spindle microtubules and for mitosis progression. Regulates microtubule stability by inhibiting Spastin-mediated depolymerization and promoting Eb1-mediated polymerization. The protein is Alpha/beta-tubulin-N-acetyltransferase 9 of Drosophila melanogaster (Fruit fly).